The chain runs to 234 residues: Ubiquinone biosynthesis O-methyltransferase (234 aa).

S-adenosyl-L-methionine is bound by residues R37, G56, D77, and M121.

This sequence belongs to the methyltransferase superfamily. UbiG/COQ3 family.

It catalyses the reaction a 3-demethylubiquinol + S-adenosyl-L-methionine = a ubiquinol + S-adenosyl-L-homocysteine + H(+). It carries out the reaction a 3-(all-trans-polyprenyl)benzene-1,2-diol + S-adenosyl-L-methionine = a 2-methoxy-6-(all-trans-polyprenyl)phenol + S-adenosyl-L-homocysteine + H(+). It participates in cofactor biosynthesis; ubiquinone biosynthesis. Functionally, O-methyltransferase that catalyzes the 2 O-methylation steps in the ubiquinone biosynthetic pathway. This Aromatoleum aromaticum (strain DSM 19018 / LMG 30748 / EbN1) (Azoarcus sp. (strain EbN1)) protein is Ubiquinone biosynthesis O-methyltransferase.